Here is a 716-residue protein sequence, read N- to C-terminus: DNA helicase/primase complex-associated protein (716 aa).

This sequence belongs to the herpesviridae HEPA family. In terms of assembly, associates with the primase and the helicase to form the helicase-primase complex. Interacts with the origin-binding protein. Interacts with the polymerase catalytic subunit.

Its subcellular location is the host nucleus. Component of the helicase/primase complex. Unwinds the DNA at the replication forks and generates single-stranded DNA for both leading and lagging strand synthesis. The primase synthesizes short RNA primers on the lagging strand that the polymerase presumably elongates using dNTPs. The primase-associated factor has no known catalytic activity in the complex and may serve to facilitate the formation of the replisome by directly interacting with the origin-binding protein and the polymerase. In Equus caballus (Horse), this protein is DNA helicase/primase complex-associated protein.